An 839-amino-acid chain; its full sequence is Probable inorganic carbon transporter subunit DabA (839 aa).

4 residues coordinate Zn(2+): C353, D355, H537, and C552.

The protein belongs to the inorganic carbon transporter (TC 9.A.2) DabA family. As to quaternary structure, forms a complex with DabB. Requires Zn(2+) as cofactor.

The protein localises to the cell membrane. Its function is as follows. Part of an energy-coupled inorganic carbon pump. This is Probable inorganic carbon transporter subunit DabA from Chloroflexus aggregans (strain MD-66 / DSM 9485).